We begin with the raw amino-acid sequence, 285 residues long: Aquaporin-6 (285 aa).

3 helical membrane passes run 36–56 (IFWK…VFSC), 76–96 (YCFK…ALLL), and 105–125 (ISLV…CYYG). An NPA 1 motif is present at residues 86–88 (NPV). N-linked (GlcNAc...) asparagine glycosylation occurs at Asn-128. Helical transmembrane passes span 143–163 (VSPA…ILTM) and 177–197 (GDSN…SGMA). The NPA 2 motif lies at 206 to 208 (NPM). Residues 225 to 245 (YIYWIGPIFGCLLAVFTFDYT) traverse the membrane as a helical segment.

It belongs to the MIP/aquaporin (TC 1.A.8) family.

It is found in the cell membrane. Probable water-specific aquaporin that may modulate the water content and osmolytes during anhydrobiosis. The protein is Aquaporin-6 of Milnesium tardigradum (Water bear).